We begin with the raw amino-acid sequence, 961 residues long: FYVE, RhoGEF and PH domain-containing protein 1 (961 aa).

Over residues 1–11 the composition is skewed to gly residues; the sequence is MHGHRAPGGAG. The interval 1–353 is disordered; sequence MHGHRAPGGA…DEEEEEEKDR (353 aa). The segment covering 27 to 38 has biased composition (low complexity); the sequence is PPACADSDPGAS. A Phosphoserine modification is found at serine 48. Positions 125–135 are enriched in basic and acidic residues; the sequence is PHPEGPQRLRS. Pro residues-rich tracts occupy residues 156–165 and 172–190; these read GPKPQVPPKP and RMPPPLEPIPPPPSRPLPA. The SH3-binding motif lies at 171 to 187; the sequence is PRMPPPLEPIPPPPSRP. The segment covering 199–213 has biased composition (low complexity); the sequence is APRAEASPSSAAVSS. The residue at position 205 (serine 205) is a Phosphoserine. Over residues 231-255 the composition is skewed to pro residues; sequence VPGPSPGPPEPVMLPQPTSQPPVPQ. The span at 273-284 shows a compositional bias: basic and acidic residues; that stretch reads RDGEKVPNRDSG. Composition is skewed to low complexity over residues 285 to 294 and 316 to 325; these read IDSISSPSNS and ALASVPVALA. Residues 335 to 351 show a composition bias toward acidic residues; sequence VDSDLEEEDDEEEEEEK. The DH domain occupies 373-561; that stretch reads KVFHIANELL…ATAAEHSNAA (189 aa). The region spanning 590–689 is the PH 1 domain; sequence ELIKEGHILK…WVQAINSTLL (100 aa). The disordered stretch occupies residues 702-726; sequence NSTNREDEDTPPNSPNVDLGKRAPT. Threonine 711 carries the post-translational modification Phosphothreonine. Serine 715 carries the post-translational modification Phosphoserine. Residues 730–790 form an FYVE-type zinc finger; that stretch reads EKEVTMCMRC…VCTDCYVALH (61 aa). Cysteine 736, cysteine 739, cysteine 753, cysteine 756, cysteine 761, cysteine 764, cysteine 782, and cysteine 785 together coordinate Zn(2+). The PH 2 domain occupies 821–921; sequence NSVICSFLHY…WMAVLGRAGR (101 aa). The segment at 925-961 is disordered; sequence FCPGPTLSEDREMEEAPVAALGATAEPPESPQTRDKT.

In terms of assembly, interacts with DBNL/ABP1 and CTTN. May interact with CCPG1. Binds CDC42. As to expression, expressed in fetal heart, brain, lung, kidney and placenta. Less expressed in liver; adult heart, brain, lung, pancreas and skeletal muscle.

The protein localises to the cytoplasm. It localises to the cell projection. The protein resides in the lamellipodium. Its subcellular location is the ruffle. It is found in the cytoskeleton. Functionally, activates CDC42, a member of the Ras-like family of Rho- and Rac proteins, by exchanging bound GDP for free GTP. Plays a role in regulating the actin cytoskeleton and cell shape. This Homo sapiens (Human) protein is FYVE, RhoGEF and PH domain-containing protein 1 (FGD1).